A 255-amino-acid polypeptide reads, in one-letter code: 2-(S)-hydroxypropyl-CoM dehydrogenase 3 (255 aa).

NAD(+)-binding positions include isoleucine 19, aspartate 38, 64-65 (DV), and asparagine 91. The (S)-2-hydroxypropyl-coenzyme M site is built by serine 143 and tyrosine 156. Tyrosine 156 functions as the Proton acceptor in the catalytic mechanism. Lysine 160 provides a ligand contact to NAD(+). Residue threonine 188 coordinates (S)-2-hydroxypropyl-coenzyme M. Residue 189-193 (VTSTG) coordinates NAD(+). Tyrosine 215 is a (S)-2-hydroxypropyl-coenzyme M binding site.

This sequence belongs to the short-chain dehydrogenases/reductases (SDR) family. In terms of assembly, homotetramer.

The enzyme catalyses (S)-2-hydroxypropyl-coenzyme M + NAD(+) = 2-oxopropyl-coenzyme M + NADH + H(+). Not inhibited by 2-(2-methyl-2-hydroxypropylthio)ethanesulfonate (M-HPC), an achiral analog of both R-HPC and S-HPC. Its function is as follows. Involved in aliphatic epoxide carboxylation. Catalyzes the reversible oxidation of (2S)-2-hydroxypropyl-coenzyme M (S-HPC) to 2-oxopropyl-coenzyme M (2-KPC). The enzyme is highly specific for the S enantiomers. In vitro can also use the aliphatic ketone 2-butanone and the aliphatic alcohol 2-propanol, and shows an inherent stereoselectivity for 2-butanone reduction. The protein is 2-(S)-hydroxypropyl-CoM dehydrogenase 3 of Xanthobacter autotrophicus (strain ATCC BAA-1158 / Py2).